The chain runs to 352 residues: C-C chemokine receptor type 5 (352 aa).

At 1-30 the chain is on the extracellular side; the sequence is MDYQVSSPTYDIDYYTSEPCQKINVKQIAA. Sulfotyrosine is present on Tyr3. O-linked (GalNAc...) serine glycans are attached at residues Ser6 and Ser7. Residues Tyr10, Tyr14, and Tyr15 each carry the sulfotyrosine modification. Disulfide bonds link Cys20-Cys269 and Cys101-Cys178. Residues 31-58 traverse the membrane as a helical segment; it reads RLLPPLYSLVFIFGFVGNILVVLILINC. At 59–68 the chain is on the cytoplasmic side; that stretch reads KRLKSMTDIY. The helical transmembrane segment at 69–89 threads the bilayer; that stretch reads LLNLAISDLLFLLTVPFWAHY. At 90–102 the chain is on the extracellular side; it reads AAAQWDFGNTMCQ. A helical transmembrane segment spans residues 103-124; sequence LLTGLYFIGFFSGIFFIILLTI. At 125–141 the chain is on the cytoplasmic side; sequence DRYLAIVHAVFALKART. A helical transmembrane segment spans residues 142 to 166; that stretch reads VTFGVVTSVITWVVAVFASLPRIIF. The Extracellular segment spans residues 167 to 198; sequence TRSQREGLHYACSSHFPYSQYQFWKNFQTLKI. Residues 199-218 form a helical membrane-spanning segment; it reads VILGLVLPLLVMVICYSGIL. The Cytoplasmic portion of the chain corresponds to 219-235; the sequence is KTLLRCRNEKKRHRAVR. The helical transmembrane segment at 236 to 260 threads the bilayer; it reads LIFTIMIVYFLFWAPYNIVLLLNTF. Over 261–277 the chain is Extracellular; the sequence is QEFFGLNNCSSSNRLDQ. A helical membrane pass occupies residues 278 to 301; it reads AMQVTETLGMTHCCINPIIYAFVG. Over 302 to 352 the chain is Cytoplasmic; that stretch reads EKFRNYLLVFFQKHIAKRFCKCCSIFQQEAPERASSVYTRSTGEQEISVGL. S-palmitoyl cysteine attachment occurs at residues Cys321, Cys323, and Cys324. Phosphoserine; by BARK1 occurs at positions 336, 337, 342, and 349.

This sequence belongs to the G-protein coupled receptor 1 family. Interacts with PRAF2. Efficient ligand binding to CCL3/MIP-1alpha and CCL4/MIP-1beta requires sulfation, O-glycosylation and sialic acid modifications. Glycosylation on Ser-6 is required for efficient binding of CCL4. Interacts with GRK2. Interacts with ARRB1 and ARRB2. Interacts with CNIH4. Interacts with S100A4; this interaction stimulates T-lymphocyte chemotaxis. In terms of processing, sulfated on at least 2 of the N-terminal tyrosines. Sulfation is required for efficient binding of the chemokines, CCL3 and CCL4. Post-translationally, palmitoylation in the C-terminal is important for cell surface expression. Phosphorylation on serine residues in the C-terminal is stimulated by binding CC chemokines especially by APO-RANTES. In terms of processing, O-glycosylated, but not N-glycosylated. Ser-6 appears to be the major site even if Ser-7 may be also O-glycosylated. Also sialylated glycans present which contribute to chemokine binding. Thr-16 and Ser-17 may also be glycosylated and, if so, with small moieties such as a T-antigen.

Its subcellular location is the cell membrane. Functionally, receptor for a number of inflammatory CC-chemokines including CCL3/MIP-1-alpha, CCL4/MIP-1-beta and RANTES and subsequently transduces a signal by increasing the intracellular calcium ion level. May play a role in the control of granulocytic lineage proliferation or differentiation. Participates in T-lymphocyte migration to the infection site by acting as a chemotactic receptor. The sequence is that of C-C chemokine receptor type 5 (CCR5) from Chlorocebus pygerythrus (Vervet monkey).